The following is a 130-amino-acid chain: Putative transposase for insertion sequence element IS6501 (130 aa).

The protein belongs to the transposase 11 family.

Its function is as follows. Involved in the transposition of the insertion sequence. The protein is Putative transposase for insertion sequence element IS6501 of Brucella ovis (strain ATCC 25840 / 63/290 / NCTC 10512).